Reading from the N-terminus, the 102-residue chain is Aspartyl/glutamyl-tRNA(Asn/Gln) amidotransferase subunit C (102 aa).

The protein belongs to the GatC family. In terms of assembly, heterotrimer of A, B and C subunits.

It catalyses the reaction L-glutamyl-tRNA(Gln) + L-glutamine + ATP + H2O = L-glutaminyl-tRNA(Gln) + L-glutamate + ADP + phosphate + H(+). The catalysed reaction is L-aspartyl-tRNA(Asn) + L-glutamine + ATP + H2O = L-asparaginyl-tRNA(Asn) + L-glutamate + ADP + phosphate + 2 H(+). Functionally, allows the formation of correctly charged Asn-tRNA(Asn) or Gln-tRNA(Gln) through the transamidation of misacylated Asp-tRNA(Asn) or Glu-tRNA(Gln) in organisms which lack either or both of asparaginyl-tRNA or glutaminyl-tRNA synthetases. The reaction takes place in the presence of glutamine and ATP through an activated phospho-Asp-tRNA(Asn) or phospho-Glu-tRNA(Gln). The polypeptide is Aspartyl/glutamyl-tRNA(Asn/Gln) amidotransferase subunit C (Bordetella pertussis (strain Tohama I / ATCC BAA-589 / NCTC 13251)).